Reading from the N-terminus, the 396-residue chain is MSVSIFGSAKANSATKALLLGSGELGKEVAIELQRFGIEVIAADSYENAPAMQVAHSSHVVSMLDGEKLATIIRAEKPDFIIPEVEAIATDTLLALEAEGFNVVPTARAAKLTMDREGIRRLAAETLGIKTSPYIFADSKEEYLSAIEKIGKPCVIKPVMSSSGKGQSIVKSAADLDNAWTYSQVGGRSGEGRIIIEGFVPFDYEITLLTVNAVDGTHFCDPIGHRQENGDYRESWQPQAMSTVALQKAQNIAKKIVTELGGYGLFGMEFFVKGDQVYFSEVSPRPHDTGLVTLVSQDASEFALHVRAILGFPIGRIIQYGPCASSVILGNGLSDDIKFTNLDQALGSVAGAQIRLFAKPDINGQRRLGVAIARGETVEEAVDNAKTVSNKVNIIY.

Residues 24–25 (EL) and E84 contribute to the N(1)-(5-phospho-beta-D-ribosyl)glycinamide site. Residues R116, K157, 162–167 (SSGKGQ), 197–200 (EGFV), and E205 contribute to the ATP site. Residues 121–310 (RLAAETLGIK…EFALHVRAIL (190 aa)) form the ATP-grasp domain. 2 residues coordinate Mg(2+): E269 and E281. N(1)-(5-phospho-beta-D-ribosyl)glycinamide contacts are provided by residues D288, K359, and 366–367 (RR).

It belongs to the PurK/PurT family. In terms of assembly, homodimer.

The catalysed reaction is N(1)-(5-phospho-beta-D-ribosyl)glycinamide + formate + ATP = N(2)-formyl-N(1)-(5-phospho-beta-D-ribosyl)glycinamide + ADP + phosphate + H(+). It functions in the pathway purine metabolism; IMP biosynthesis via de novo pathway; N(2)-formyl-N(1)-(5-phospho-D-ribosyl)glycinamide from N(1)-(5-phospho-D-ribosyl)glycinamide (formate route): step 1/1. Involved in the de novo purine biosynthesis. Catalyzes the transfer of formate to 5-phospho-ribosyl-glycinamide (GAR), producing 5-phospho-ribosyl-N-formylglycinamide (FGAR). Formate is provided by PurU via hydrolysis of 10-formyl-tetrahydrofolate. This chain is Formate-dependent phosphoribosylglycinamide formyltransferase, found in Psychromonas ingrahamii (strain DSM 17664 / CCUG 51855 / 37).